The following is a 905-amino-acid chain: Respiratory burst oxidase homolog protein B (905 aa).

Disordered regions lie at residues M1 to R46 and E69 to R134. Over M1 to R355 the chain is Cytoplasmic. The segment covering I29–T44 has biased composition (polar residues). Positions E75 to F84 are enriched in gly residues. A compositionally biased stretch (polar residues) spans S91 to N108. EF-hand-like regions lie at residues Q172–S180 and R206–E217. 2 EF-hand domains span residues G229 to A264 and R273 to E308. Ca(2+) is bound by residues D242, N244, D246, R248, and E253. Residues S356 to Q376 form a helical membrane-spanning segment. At Y377–V440 the chain is on the extracellular side. One can recognise a Ferric oxidoreductase domain in the interval G395 to L551. The chain crosses the membrane as a helical span at residues I441–F461. Over P462–G496 the chain is Cytoplasmic. The chain crosses the membrane as a helical span at residues W497–F517. Over R518–F539 the chain is Extracellular. The helical transmembrane segment at T540 to L560 threads the bilayer. At S561–T568 the chain is on the cytoplasmic side. A helical membrane pass occupies residues T569 to L586. Residues R587–D715 form the FAD-binding FR-type domain. The Extracellular segment spans residues R587 to R717. A helical transmembrane segment spans residues E718–V738. Topologically, residues K739 to F905 are cytoplasmic.

The protein belongs to the RBOH (TC 5.B.1.3) family. As to quaternary structure, monomer and homodimer, stabilized by swapping the EF-hand motifs. Interacts with GTP-bound RAC1.

Its subcellular location is the membrane. Functionally, calcium-dependent NADPH oxidase that generates superoxide. The protein is Respiratory burst oxidase homolog protein B (RBOHB) of Oryza sativa subsp. japonica (Rice).